We begin with the raw amino-acid sequence, 84 residues long: Beta-defensin 119 (84 aa).

A signal peptide spans 1–21; the sequence is MKLLYLFLAILLAIEEPVISG. 3 disulfides stabilise this stretch: Cys28–Cys55, Cys35–Cys49, and Cys39–Cys56.

Belongs to the beta-defensin family. As to expression, abundant expression in the male reproductive tract only. Abundant expressed in testis and the caput region of epididymis, but low in the corpus region.

The protein resides in the secreted. In terms of biological role, has antibacterial activity. The polypeptide is Beta-defensin 119 (DEFB119) (Homo sapiens (Human)).